The sequence spans 173 residues: Crossover junction endodeoxyribonuclease RuvC (173 aa).

Catalysis depends on residues D8, E67, and D139. Mg(2+)-binding residues include D8, E67, and D139.

It belongs to the RuvC family. In terms of assembly, homodimer which binds Holliday junction (HJ) DNA. The HJ becomes 2-fold symmetrical on binding to RuvC with unstacked arms; it has a different conformation from HJ DNA in complex with RuvA. In the full resolvosome a probable DNA-RuvA(4)-RuvB(12)-RuvC(2) complex forms which resolves the HJ. Requires Mg(2+) as cofactor.

It is found in the cytoplasm. It carries out the reaction Endonucleolytic cleavage at a junction such as a reciprocal single-stranded crossover between two homologous DNA duplexes (Holliday junction).. The RuvA-RuvB-RuvC complex processes Holliday junction (HJ) DNA during genetic recombination and DNA repair. Endonuclease that resolves HJ intermediates. Cleaves cruciform DNA by making single-stranded nicks across the HJ at symmetrical positions within the homologous arms, yielding a 5'-phosphate and a 3'-hydroxyl group; requires a central core of homology in the junction. The consensus cleavage sequence is 5'-(A/T)TT(C/G)-3'. Cleavage occurs on the 3'-side of the TT dinucleotide at the point of strand exchange. HJ branch migration catalyzed by RuvA-RuvB allows RuvC to scan DNA until it finds its consensus sequence, where it cleaves and resolves the cruciform DNA. The sequence is that of Crossover junction endodeoxyribonuclease RuvC from Klebsiella pneumoniae (strain 342).